The sequence spans 409 residues: Outer membrane protein assembly factor BamB (409 aa).

The N-terminal stretch at 1-34 is a signal peptide; it reads MAGNILLLILDYVFHAGSRTLRVCILSLLILLSG. C35 is lipidated: N-palmitoyl cysteine. C35 is lipidated: S-diacylglycerol cysteine.

This sequence belongs to the BamB family. Part of the Bam complex.

The protein localises to the cell outer membrane. Part of the outer membrane protein assembly complex, which is involved in assembly and insertion of beta-barrel proteins into the outer membrane. This chain is Outer membrane protein assembly factor BamB, found in Nitrosomonas eutropha (strain DSM 101675 / C91 / Nm57).